Reading from the N-terminus, the 101-residue chain is Phosphoprotein OPG062 (101 aa).

The tract at residues 48 to 76 is disordered; sequence VDKPSSPASERRPSSPSRCERMNNPGKQV. Serine 53 and serine 62 each carry phosphoserine. The span at 56–68 shows a compositional bias: basic and acidic residues; the sequence is SERRPSSPSRCER.

Belongs to the orthopoxvirus OPG062 family. Self-associates to form high molecular-weight forms. Interacts with protein OPG157. Interacts with host RICTOR and RPTOR; these interactions disrupt the mTORC1 and mTORC2 crosstalk. Phosphorylated on two serines. While these phosphorylations do not play a role in virion assembly; they are essential for the interaction with host RICTOR and RPTOR.

The protein resides in the virion. Its function is as follows. Plays an essential role in virion assembly and morphogenesis. Also plays a role in the inhibition of host immune response by dysregulating mTOR. Sequesters host RICTOR and RPTOR, thereby disrupting mTORC1 and mTORC2 crosstalk. In turn, blocks the host antiviral response in part through mTOR-dependent degradation of cGAS, the primary poxvirus sensor. The protein is Phosphoprotein OPG062 (OPG062) of Variola virus (isolate Human/India/Ind3/1967) (VARV).